The following is a 712-amino-acid chain: Patatin-like phospholipase domain-containing protein NFIA_019760 (712 aa).

The span at 1-13 (MTSDEKSATRDIY) shows a compositional bias: basic and acidic residues. A disordered region spans residues 1–21 (MTSDEKSATRDIYDPNTLPDY). A helical membrane pass occupies residues 85-105 (WPFLFTVFAWITVLGFAYTLT). One can recognise a PNPLA domain in the interval 275 to 466 (LCLSGGATFA…RTDIPIKALN (192 aa)). The GXSXG motif lies at 306–310 (GTSGG). The Nucleophile role is filled by serine 308. The active-site Proton acceptor is the aspartate 453. Residues 628-687 (RRRQDRAEEHADRMVERLDQSFPERQSDYKDESHYTEVSDSLSATSSRPHTPDARRSSMF) form a disordered region. Composition is skewed to basic and acidic residues over residues 632–646 (DRAEEHADRMVERLD) and 652–664 (RQSDYKDESHYTE). The segment covering 665–676 (VSDSLSATSSRP) has biased composition (polar residues). Over residues 677–687 (HTPDARRSSMF) the composition is skewed to basic and acidic residues.

This sequence belongs to the PLPL family.

It localises to the membrane. Probable lipid hydrolase. This Neosartorya fischeri (strain ATCC 1020 / DSM 3700 / CBS 544.65 / FGSC A1164 / JCM 1740 / NRRL 181 / WB 181) (Aspergillus fischerianus) protein is Patatin-like phospholipase domain-containing protein NFIA_019760.